The primary structure comprises 121 residues: MKIVISKPDKNKIRQKRHRRVRGKLSGTADRPRLNVFRSNTGIYAQVIDDVAGVTLASASTLDKDVSKGTKTEQAVVVGKLVAERAVAKGISEVVFDRGGYLYHGRVKALADAARENGLKF.

The interval 1–25 (MKIVISKPDKNKIRQKRHRRVRGKL) is disordered. Residues 13–23 (IRQKRHRRVRG) are compositionally biased toward basic residues.

This sequence belongs to the universal ribosomal protein uL18 family. Part of the 50S ribosomal subunit; part of the 5S rRNA/L5/L18/L25 subcomplex. Contacts the 5S and 23S rRNAs.

In terms of biological role, this is one of the proteins that bind and probably mediate the attachment of the 5S RNA into the large ribosomal subunit, where it forms part of the central protuberance. In Streptococcus pyogenes serotype M28 (strain MGAS6180), this protein is Large ribosomal subunit protein uL18.